Here is a 369-residue protein sequence, read N- to C-terminus: 4-hydroxy-3-methylbut-2-en-1-yl diphosphate synthase (flavodoxin) (369 aa).

Residues Cys268, Cys271, Cys303, and Glu310 each contribute to the [4Fe-4S] cluster site.

Belongs to the IspG family. [4Fe-4S] cluster is required as a cofactor.

It carries out the reaction (2E)-4-hydroxy-3-methylbut-2-enyl diphosphate + oxidized [flavodoxin] + H2O + 2 H(+) = 2-C-methyl-D-erythritol 2,4-cyclic diphosphate + reduced [flavodoxin]. It participates in isoprenoid biosynthesis; isopentenyl diphosphate biosynthesis via DXP pathway; isopentenyl diphosphate from 1-deoxy-D-xylulose 5-phosphate: step 5/6. In terms of biological role, converts 2C-methyl-D-erythritol 2,4-cyclodiphosphate (ME-2,4cPP) into 1-hydroxy-2-methyl-2-(E)-butenyl 4-diphosphate. This Exiguobacterium sibiricum (strain DSM 17290 / CCUG 55495 / CIP 109462 / JCM 13490 / 255-15) protein is 4-hydroxy-3-methylbut-2-en-1-yl diphosphate synthase (flavodoxin).